A 232-amino-acid polypeptide reads, in one-letter code: A-type ATP synthase subunit D (232 aa).

The disordered stretch occupies residues 200–232 (KKIKNKKEAEEEDEDEDESEMTDETVVQTPADD). Residues 209–222 (EEEDEDEDESEMTD) are compositionally biased toward acidic residues.

This sequence belongs to the V-ATPase D subunit family. In terms of assembly, has multiple subunits with at least A(3), B(3), C, D, E, F, H, I and proteolipid K(x).

It localises to the cell membrane. Functionally, component of the A-type ATP synthase that produces ATP from ADP in the presence of a proton gradient across the membrane. The protein is A-type ATP synthase subunit D of Haloquadratum walsbyi (strain DSM 16790 / HBSQ001).